We begin with the raw amino-acid sequence, 716 residues long: Cytoplasmic polyadenylation element-binding protein 3 (716 aa).

Basic and acidic residues predominate over residues M1 to K11. 2 disordered regions span residues M1–G118 and A162–A209. Low complexity-rich tracts occupy residues Q13 to Q31 and S54 to A63. Positions P91–P100 are enriched in pro residues. The span at L107 to G118 shows a compositional bias: polar residues. A compositionally biased stretch (pro residues) spans Q169–A186. The span at Q187–A209 shows a compositional bias: low complexity. A phosphoserine mark is found at S194, S197, and S291. At R309 the chain carries Asymmetric dimethylarginine. Phosphoserine is present on residues S419 and S420. 2 RRM domains span residues R459–L550 and K567–L649.

It belongs to the RRM CPEB family. As to quaternary structure, following synaptic activity, aggregates to form amyloid-like oligomers. Aggregation requires an intact actin cytoskeleton. Interacts with STAT5B; this inhibits STAT5B-mediated transcriptional activation. Interacts with E3 ubiquitin-protein ligase NEURL1; this leads to monoubiquitination and activation of CPEB3. Interacts with CAPN2; this leads to cleavage of CPEB3. Interacts (via C-terminal RNA-binding region) with TOB1; TOB1 also binds CNOT7/CAF1 and recruits it to CPEB3 to form a ternary complex. Interacts with SUMO-conjugating enzyme UBC9. Interacts with IPO5; the interaction is enhanced in a RAN-regulated manner following neuronal stimulation and mediates CPEB3 nuclear import. Interacts with exportin XPO1/CRM1. Activated by NEURL1-mediated monoubiquitination, resulting in the growth of new dendritic spines and increased levels of GRIA1 and GRIA2. NEURL1-mediated monoubiquitination facilitates synaptic plasticity and hippocampal-dependent memory storage. In terms of processing, under basal unstimulated conditions when CPEB3 is mainly unaggregated, sumoylated and acts as a translational repressor. Following neuronal stimulation, becomes desumoylated and aggregated which is required for the translation of mRNA targets and for dendritic filopodia formation. Post-translationally, following neuronal stimulation, cleaved by CAPN2 which abolishes its translational repressor activity, leading to translation of CPEB3 target mRNAs. Phosphorylation is enhanced by neuronal stimulation. As to expression, highly expressed in brain (at protein level). In brain, expressed in the hippocampus, granule cells and interneurons of the cerebellum, and mitral cells of the olfactory bulb (at protein level). Detected in the spinal cord and in peripheral dorsal root ganglia (at protein level). In the retina, strongly expressed in the retinal ganglion layer and, to a lesser extent, in the inner margin of the inner nuclear layer with expression also detected in the inner and outer plexiform layers (at protein level). Highly expressed in brain and heart, less in liver, kidney, embryo, skeletal muscle, lung and ovary. Weakly expressed in granular cells of dentate gyrus and the pyramidal cells of CA3 and CA1 of the hippocampus.

Its subcellular location is the cytoplasm. The protein localises to the nucleus. The protein resides in the synapse. It localises to the cell projection. It is found in the dendrite. Its subcellular location is the postsynaptic density. Its function is as follows. Sequence-specific RNA-binding protein which acts as a translational repressor in the basal unstimulated state but, following neuronal stimulation, acts as a translational activator. In contrast to CPEB1, does not bind to the cytoplasmic polyadenylation element (CPE), a uridine-rich sequence element within the mRNA 3'-UTR, but binds to a U-rich loop within a stem-loop structure. Required for the consolidation and maintenance of hippocampal-based long term memory. In the basal state, binds to the mRNA 3'-UTR of the glutamate receptors GRIA1 and GRIA2 and negatively regulates their translation. Also represses the translation of DLG4, GRIN1 GRIN2A and GRIN2B. When activated, acts as a translational activator of GRIA1 and GRIA2. In the basal state, suppresses SUMO2 translation but activates it following neuronal stimulation. Binds to the 3'-UTR of TRPV1 mRNA and represses TRPV1 translation which is required to maintain normal thermoception. Binds actin mRNA, leading to actin translational repression in the basal state and to translational activation following neuronal stimulation. Negatively regulates target mRNA levels by binding to TOB1 which recruits CNOT7/CAF1 to a ternary complex and this leads to target mRNA deadenylation and decay. In addition to its role in translation, binds to and inhibits the transcriptional activation activity of STAT5B without affecting its dimerization or DNA-binding activity. This, in turn, represses transcription of the STAT5B target gene EGFR which has been shown to play a role in enhancing learning and memory performance. In contrast to CPEB1, CPEB2 and CPEB4, not required for cell cycle progression. This is Cytoplasmic polyadenylation element-binding protein 3 (Cpeb3) from Mus musculus (Mouse).